The chain runs to 73 residues: Sec-independent protein translocase protein TatA (73 aa).

The helical transmembrane segment at 1–21 (MGSFSIWHWVIVLVVVVLIFG) threads the bilayer. Residues 43–73 (MKSEGEDAAQTPPAAQKEGGRVIDAEPADKK) form a disordered region. The span at 60-73 (EGGRVIDAEPADKK) shows a compositional bias: basic and acidic residues.

This sequence belongs to the TatA/E family. As to quaternary structure, the Tat system comprises two distinct complexes: a TatABC complex, containing multiple copies of TatA, TatB and TatC subunits, and a separate TatA complex, containing only TatA subunits. Substrates initially bind to the TatABC complex, which probably triggers association of the separate TatA complex to form the active translocon.

It localises to the cell inner membrane. Functionally, part of the twin-arginine translocation (Tat) system that transports large folded proteins containing a characteristic twin-arginine motif in their signal peptide across membranes. TatA could form the protein-conducting channel of the Tat system. In Laribacter hongkongensis (strain HLHK9), this protein is Sec-independent protein translocase protein TatA.